Reading from the N-terminus, the 233-residue chain is Putative cobalt transport protein CbiM (233 aa).

A run of 6 helical transmembrane segments spans residues 9-29, 43-63, 75-95, 107-127, 138-158, and 177-197; these read PPMW…YGIV, PLVA…MPSV, LGAV…VLLF, TLGA…VIVY, TVGI…TTAV, and IVIY…LTVI.

Belongs to the CbiM family. Forms an energy-coupling factor (ECF) transporter complex composed of an ATP-binding protein (A component, CbiO), a transmembrane protein (T component, CbiQ) and 2 possible substrate-capture proteins (S components, CbiM and CbiN) of unknown stoichimetry.

The protein localises to the cell membrane. It functions in the pathway cofactor biosynthesis; adenosylcobalamin biosynthesis. Part of the energy-coupling factor (ECF) transporter complex CbiMNOQ involved in cobalt import. In Methanocaldococcus jannaschii (strain ATCC 43067 / DSM 2661 / JAL-1 / JCM 10045 / NBRC 100440) (Methanococcus jannaschii), this protein is Putative cobalt transport protein CbiM.